The primary structure comprises 276 residues: Rhamnulose-1-phosphate aldolase (276 aa).

Glutamate 117 is a catalytic residue. Zn(2+)-binding residues include histidine 141, histidine 143, and histidine 212.

Belongs to the aldolase class II family. RhaD subfamily. In terms of assembly, homotetramer. It depends on Zn(2+) as a cofactor.

It localises to the cytoplasm. The catalysed reaction is L-rhamnulose 1-phosphate = (S)-lactaldehyde + dihydroxyacetone phosphate. The protein operates within carbohydrate degradation; L-rhamnose degradation; glycerone phosphate from L-rhamnose: step 3/3. Catalyzes the reversible cleavage of L-rhamnulose-1-phosphate to dihydroxyacetone phosphate (DHAP) and L-lactaldehyde. This Klebsiella pneumoniae subsp. pneumoniae (strain ATCC 700721 / MGH 78578) protein is Rhamnulose-1-phosphate aldolase.